A 499-amino-acid polypeptide reads, in one-letter code: Cytochrome P450 705A12 (499 aa).

A helical membrane pass occupies residues 4–24; the sequence is LIIVDFQNISIFILLCLFSFL. Position 439 (C439) interacts with heme.

It belongs to the cytochrome P450 family. It depends on heme as a cofactor.

It is found in the membrane. Functionally, may be involved in hydroxylation of the triterpene marneral. This Arabidopsis thaliana (Mouse-ear cress) protein is Cytochrome P450 705A12.